Here is a 422-residue protein sequence, read N- to C-terminus: Serine--tRNA ligase (422 aa).

Position 226 to 228 (Thr-226 to Glu-228) interacts with L-serine. ATP contacts are provided by residues Arg-257–Glu-259 and Val-273. Glu-280 contacts L-serine. Glu-344–Ser-347 lines the ATP pocket. L-serine is bound at residue Thr-379.

It belongs to the class-II aminoacyl-tRNA synthetase family. Type-1 seryl-tRNA synthetase subfamily. Homodimer. The tRNA molecule binds across the dimer.

It localises to the cytoplasm. The enzyme catalyses tRNA(Ser) + L-serine + ATP = L-seryl-tRNA(Ser) + AMP + diphosphate + H(+). It carries out the reaction tRNA(Sec) + L-serine + ATP = L-seryl-tRNA(Sec) + AMP + diphosphate + H(+). It functions in the pathway aminoacyl-tRNA biosynthesis; selenocysteinyl-tRNA(Sec) biosynthesis; L-seryl-tRNA(Sec) from L-serine and tRNA(Sec): step 1/1. Functionally, catalyzes the attachment of serine to tRNA(Ser). Is also able to aminoacylate tRNA(Sec) with serine, to form the misacylated tRNA L-seryl-tRNA(Sec), which will be further converted into selenocysteinyl-tRNA(Sec). This is Serine--tRNA ligase from Corynebacterium glutamicum (strain ATCC 13032 / DSM 20300 / JCM 1318 / BCRC 11384 / CCUG 27702 / LMG 3730 / NBRC 12168 / NCIMB 10025 / NRRL B-2784 / 534).